A 420-amino-acid polypeptide reads, in one-letter code: Serine hydroxymethyltransferase (420 aa).

(6S)-5,6,7,8-tetrahydrofolate is bound by residues Leu123 and 127–129 (GHL). The residue at position 232 (Lys232) is an N6-(pyridoxal phosphate)lysine. 357-359 (SPF) contributes to the (6S)-5,6,7,8-tetrahydrofolate binding site.

The protein belongs to the SHMT family. In terms of assembly, homodimer. The cofactor is pyridoxal 5'-phosphate.

It localises to the cytoplasm. It catalyses the reaction (6R)-5,10-methylene-5,6,7,8-tetrahydrofolate + glycine + H2O = (6S)-5,6,7,8-tetrahydrofolate + L-serine. It participates in one-carbon metabolism; tetrahydrofolate interconversion. It functions in the pathway amino-acid biosynthesis; glycine biosynthesis; glycine from L-serine: step 1/1. Functionally, catalyzes the reversible interconversion of serine and glycine with tetrahydrofolate (THF) serving as the one-carbon carrier. This reaction serves as the major source of one-carbon groups required for the biosynthesis of purines, thymidylate, methionine, and other important biomolecules. Also exhibits THF-independent aldolase activity toward beta-hydroxyamino acids, producing glycine and aldehydes, via a retro-aldol mechanism. This Streptococcus pyogenes serotype M2 (strain MGAS10270) protein is Serine hydroxymethyltransferase.